We begin with the raw amino-acid sequence, 283 residues long: Formamidopyrimidine-DNA glycosylase (283 aa).

Catalysis depends on proline 2, which acts as the Schiff-base intermediate with DNA. Glutamate 3 serves as the catalytic Proton donor. Residue lysine 61 is the Proton donor; for beta-elimination activity of the active site. Histidine 94, arginine 113, and lysine 159 together coordinate DNA. The FPG-type zinc-finger motif lies at 245–279; the sequence is DAYGREGESCRRCGAVMRREKFMNRSSFYCPKCQP. Arginine 269 (proton donor; for delta-elimination activity) is an active-site residue.

It belongs to the FPG family. Monomer. Zn(2+) serves as cofactor.

The enzyme catalyses Hydrolysis of DNA containing ring-opened 7-methylguanine residues, releasing 2,6-diamino-4-hydroxy-5-(N-methyl)formamidopyrimidine.. The catalysed reaction is 2'-deoxyribonucleotide-(2'-deoxyribose 5'-phosphate)-2'-deoxyribonucleotide-DNA = a 3'-end 2'-deoxyribonucleotide-(2,3-dehydro-2,3-deoxyribose 5'-phosphate)-DNA + a 5'-end 5'-phospho-2'-deoxyribonucleoside-DNA + H(+). Involved in base excision repair of DNA damaged by oxidation or by mutagenic agents. Acts as a DNA glycosylase that recognizes and removes damaged bases. Has a preference for oxidized purines, such as 7,8-dihydro-8-oxoguanine (8-oxoG). Has AP (apurinic/apyrimidinic) lyase activity and introduces nicks in the DNA strand. Cleaves the DNA backbone by beta-delta elimination to generate a single-strand break at the site of the removed base with both 3'- and 5'-phosphates. This is Formamidopyrimidine-DNA glycosylase from Mycobacterium avium (strain 104).